The sequence spans 113 residues: U11-theraphotoxin-Hhn1a (113 aa).

The first 21 residues, 1-21 (MNTVRVTFLLVFVLAVSLGQA), serve as a signal peptide directing secretion. Residues 22-74 (DKDENRMEMQEKTEQGKSYLDFAENLLLQKLEELEAKLLEEDSEESRNSRQRR) constitute a propeptide that is removed on maturation. The interval 61-83 (EEDSEESRNSRQRRCIGEGVPCD) is disordered. 3 cysteine pairs are disulfide-bonded: Cys75–Cys90, Cys82–Cys95, and Cys89–Cys110.

It belongs to the neurotoxin 14 (magi-1) family. 01 (HNTX-16) subfamily. Expressed by the venom gland.

The protein localises to the secreted. Its function is as follows. Probable ion channel inhibitor. The chain is U11-theraphotoxin-Hhn1a from Cyriopagopus hainanus (Chinese bird spider).